The sequence spans 448 residues: Trigger factor (448 aa).

The region spanning 162–243 is the PPIase FKBP-type domain; the sequence is GDFVQIDLNA…VRTVKEKELP (82 aa).

This sequence belongs to the FKBP-type PPIase family. Tig subfamily.

It is found in the cytoplasm. It catalyses the reaction [protein]-peptidylproline (omega=180) = [protein]-peptidylproline (omega=0). Involved in protein export. Acts as a chaperone by maintaining the newly synthesized protein in an open conformation. Functions as a peptidyl-prolyl cis-trans isomerase. The polypeptide is Trigger factor (Salinispora arenicola (strain CNS-205)).